The chain runs to 377 residues: Chaperone protein DnaJ (377 aa).

Positions 5-70 constitute a J domain; the sequence is DYYEILGVSR…QKRAAYDQYG (66 aa). The CR-type zinc finger occupies 132-210; the sequence is GVTKEIRIPT…CHGHGRIEKS (79 aa). Zn(2+) contacts are provided by Cys-145, Cys-148, Cys-162, Cys-165, Cys-184, Cys-187, Cys-198, and Cys-201. CXXCXGXG motif repeat units lie at residues 145–152, 162–169, 184–191, and 198–205; these read CDVCHGSG, CPTCHGAG, CPHCHGRG, and CNKCHGHG.

The protein belongs to the DnaJ family. In terms of assembly, homodimer. Zn(2+) is required as a cofactor.

The protein localises to the cytoplasm. Participates actively in the response to hyperosmotic and heat shock by preventing the aggregation of stress-denatured proteins and by disaggregating proteins, also in an autonomous, DnaK-independent fashion. Unfolded proteins bind initially to DnaJ; upon interaction with the DnaJ-bound protein, DnaK hydrolyzes its bound ATP, resulting in the formation of a stable complex. GrpE releases ADP from DnaK; ATP binding to DnaK triggers the release of the substrate protein, thus completing the reaction cycle. Several rounds of ATP-dependent interactions between DnaJ, DnaK and GrpE are required for fully efficient folding. Also involved, together with DnaK and GrpE, in the DNA replication of plasmids through activation of initiation proteins. The chain is Chaperone protein DnaJ from Edwardsiella ictaluri (strain 93-146).